The sequence spans 156 residues: Small ribosomal subunit protein uS7 (156 aa).

This sequence belongs to the universal ribosomal protein uS7 family. In terms of assembly, part of the 30S ribosomal subunit. Contacts proteins S9 and S11.

Functionally, one of the primary rRNA binding proteins, it binds directly to 16S rRNA where it nucleates assembly of the head domain of the 30S subunit. Is located at the subunit interface close to the decoding center, probably blocks exit of the E-site tRNA. The chain is Small ribosomal subunit protein uS7 from Natranaerobius thermophilus (strain ATCC BAA-1301 / DSM 18059 / JW/NM-WN-LF).